The following is a 1002-amino-acid chain: uncharacterized protein (1002 aa).

This is an uncharacterized protein from Fiji disease virus (isolate Sugarcane) (FDV).